The sequence spans 122 residues: Large ribosomal subunit protein uL14 (122 aa).

This sequence belongs to the universal ribosomal protein uL14 family. As to quaternary structure, part of the 50S ribosomal subunit. Forms a cluster with proteins L3 and L19. In the 70S ribosome, L14 and L19 interact and together make contacts with the 16S rRNA in bridges B5 and B8.

Its function is as follows. Binds to 23S rRNA. Forms part of two intersubunit bridges in the 70S ribosome. This chain is Large ribosomal subunit protein uL14, found in Thermosynechococcus vestitus (strain NIES-2133 / IAM M-273 / BP-1).